The sequence spans 337 residues: Protein ABHD13 (337 aa).

The helical; Signal-anchor for type II membrane protein transmembrane segment at 30 to 50 (LLALILTFHLYGGFVLLGLIL) threads the bilayer. Catalysis depends on charge relay system residues Ser193, Asp268, and His298. N-linked (GlcNAc...) asparagine glycosylation is present at Asn299.

This sequence belongs to the serine esterase family.

The protein resides in the membrane. This chain is Protein ABHD13, found in Danio rerio (Zebrafish).